Here is a 96-residue protein sequence, read N- to C-terminus: MTPCLESFCQRAKDCKQNIPLPFLIQDWPLSESKPQGQDFWTPQPLQAAAPSHEFQQVALHPARTRLASRPQGGRLMSSREVGLRAPRCSCGKRKR.

This is an uncharacterized protein from Homo sapiens (Human).